The sequence spans 271 residues: MIIDVKPLYEDIKVNLLKRIEKLKRTPKLVAVTFKPDPSTVSYLKSQEKAAKRFGLDYEIFEGNSPKGVLKILAELSRDNNVNGIFVTHPLSQVNEMEIFENLVPSKDIEGRHPYNLGMLAYGEEFFAPCTAEAVVRIMENEIGIPGKNVVIVGRSNTVGKPLAIMLLRRDRSATVTVCHTKTRNLSSITKGADVVVAAAGRPGLITVDMVEKDSIIIDVGINVTDEGIIGDVSKDVANFAKVTPVPGGVGKITTILLMEHLVKSAEKMNF.

Residues 154–156 (GRS), threonine 181, and isoleucine 222 each bind NADP(+).

It belongs to the tetrahydrofolate dehydrogenase/cyclohydrolase family. As to quaternary structure, homodimer.

It carries out the reaction (6R)-5,10-methylene-5,6,7,8-tetrahydrofolate + NADP(+) = (6R)-5,10-methenyltetrahydrofolate + NADPH. The catalysed reaction is (6R)-5,10-methenyltetrahydrofolate + H2O = (6R)-10-formyltetrahydrofolate + H(+). It participates in one-carbon metabolism; tetrahydrofolate interconversion. Catalyzes the oxidation of 5,10-methylenetetrahydrofolate to 5,10-methenyltetrahydrofolate and then the hydrolysis of 5,10-methenyltetrahydrofolate to 10-formyltetrahydrofolate. The polypeptide is Bifunctional protein FolD (Thermosipho melanesiensis (strain DSM 12029 / CIP 104789 / BI429)).